The following is a 59-amino-acid chain: Large ribosomal subunit protein uL30 (59 aa).

Belongs to the universal ribosomal protein uL30 family. As to quaternary structure, part of the 50S ribosomal subunit.

This is Large ribosomal subunit protein uL30 from Desulfatibacillum aliphaticivorans.